A 157-amino-acid chain; its full sequence is UPF0251 protein CLJ_B1488 (157 aa).

This sequence belongs to the UPF0251 family.

The sequence is that of UPF0251 protein CLJ_B1488 from Clostridium botulinum (strain 657 / Type Ba4).